Reading from the N-terminus, the 420-residue chain is tRNA (guanine-N(7)-)-methyltransferase non-catalytic subunit TRM82 (420 aa).

Positions 59-68 (KENDSKRQKS) are enriched in basic and acidic residues. Positions 59 to 82 (KENDSKRQKSESGQAKVSKIPTPG) are disordered. 4 WD repeats span residues 87–127 (PIYN…DNCL), 179–220 (GHVS…VIKN), 224–266 (GHHE…AKIE), and 340–379 (SYED…EETN).

It belongs to the WD repeat TRM82 family. Forms a heterodimer with the catalytic subunit TRM8.

It is found in the nucleus. Its pathway is tRNA modification; N(7)-methylguanine-tRNA biosynthesis. Required for the formation of N(7)-methylguanine at position 46 (m7G46) in tRNA. In the complex, it is required to stabilize and induce conformational changes of the catalytic subunit. The protein is tRNA (guanine-N(7)-)-methyltransferase non-catalytic subunit TRM82 of Meyerozyma guilliermondii (strain ATCC 6260 / CBS 566 / DSM 6381 / JCM 1539 / NBRC 10279 / NRRL Y-324) (Yeast).